A 400-amino-acid polypeptide reads, in one-letter code: Phosphoglycerate kinase (400 aa).

Substrate is bound by residues 22–24 (DLN), arginine 37, 60–63 (HLGR), arginine 119, and arginine 159. ATP contacts are provided by residues lysine 209, glycine 297, glutamate 328, and 354–357 (GGDS).

It belongs to the phosphoglycerate kinase family. As to quaternary structure, monomer.

The protein localises to the cytoplasm. The enzyme catalyses (2R)-3-phosphoglycerate + ATP = (2R)-3-phospho-glyceroyl phosphate + ADP. The protein operates within carbohydrate degradation; glycolysis; pyruvate from D-glyceraldehyde 3-phosphate: step 2/5. This chain is Phosphoglycerate kinase, found in Saccharopolyspora erythraea (strain ATCC 11635 / DSM 40517 / JCM 4748 / NBRC 13426 / NCIMB 8594 / NRRL 2338).